We begin with the raw amino-acid sequence, 455 residues long: Chromosomal replication initiator protein DnaA (455 aa).

Residues 1–75 (MDTNNNIEKE…EILSQNKVGM (75 aa)) are domain I, interacts with DnaA modulators. Residues 75–106 (MHLAHSVDVRIEVAPKIQINAQANINYKAIKT) form a domain II region. Residues 107 to 321 (SVKDSYTFEN…GAIIKISVNA (215 aa)) form a domain III, AAA+ region region. Residues Gly-151, Gly-153, Lys-154, and Thr-155 each contribute to the ATP site. Positions 322-455 (NLMNAPIDLN…DKKTAFNSSE (134 aa)) are domain IV, binds dsDNA.

Belongs to the DnaA family. In terms of assembly, oligomerizes as a right-handed, spiral filament on DNA at oriC.

It is found in the cytoplasm. Functionally, plays an essential role in the initiation and regulation of chromosomal replication. ATP-DnaA binds to the origin of replication (oriC) to initiate formation of the DNA replication initiation complex once per cell cycle. Binds the DnaA box (a 9 base pair repeat at the origin) and separates the double-stranded (ds)DNA. Forms a right-handed helical filament on oriC DNA; dsDNA binds to the exterior of the filament while single-stranded (ss)DNA is stabiized in the filament's interior. The ATP-DnaA-oriC complex binds and stabilizes one strand of the AT-rich DNA unwinding element (DUE), permitting loading of DNA polymerase. After initiation quickly degrades to an ADP-DnaA complex that is not apt for DNA replication. Binds acidic phospholipids. The sequence is that of Chromosomal replication initiator protein DnaA from Helicobacter pylori (strain G27).